The primary structure comprises 488 residues: UDP-N-acetylmuramate--L-alanine ligase (488 aa).

ATP is bound at residue 129–135 (GSHGKTT).

This sequence belongs to the MurCDEF family.

The protein resides in the cytoplasm. The enzyme catalyses UDP-N-acetyl-alpha-D-muramate + L-alanine + ATP = UDP-N-acetyl-alpha-D-muramoyl-L-alanine + ADP + phosphate + H(+). The protein operates within cell wall biogenesis; peptidoglycan biosynthesis. In terms of biological role, cell wall formation. In Prochlorococcus marinus (strain MIT 9313), this protein is UDP-N-acetylmuramate--L-alanine ligase.